The primary structure comprises 306 residues: Putative S-adenosyl-L-methionine-dependent methyltransferase MAV_4442 (306 aa).

Residues Asp129 and 158–159 contribute to the S-adenosyl-L-methionine site; that span reads DL.

The protein belongs to the UPF0677 family.

Its function is as follows. Exhibits S-adenosyl-L-methionine-dependent methyltransferase activity. This Mycobacterium avium (strain 104) protein is Putative S-adenosyl-L-methionine-dependent methyltransferase MAV_4442.